The chain runs to 97 residues: Integration host factor subunit alpha (97 aa).

A disordered region spans residues 49-71 (FGNFDLRDKNQRPGRNPKTGEDI).

Belongs to the bacterial histone-like protein family. As to quaternary structure, heterodimer of an alpha and a beta chain.

This protein is one of the two subunits of integration host factor, a specific DNA-binding protein that functions in genetic recombination as well as in transcriptional and translational control. This chain is Integration host factor subunit alpha, found in Shewanella woodyi (strain ATCC 51908 / MS32).